A 49-amino-acid chain; its full sequence is Light-harvesting protein B-875 beta chain (49 aa).

Residues 2 to 27 (ADKSDLGYTGLTDEQAQELHSVYMSG) lie on the Cytoplasmic side of the membrane. A bacteriochlorophyll contacts are provided by His-21 and His-39. A helical; Signal-anchor for type II membrane protein membrane pass occupies residues 28–45 (LWPFSAVAIVAHLAVYIW). Residues 46–49 (RPWF) lie on the Periplasmic side of the membrane.

Belongs to the antenna complex beta subunit family. In terms of assembly, the core complex is formed by different alpha and beta chains, binding bacteriochlorophyll molecules, and arranged most probably in tetrameric structures disposed around the reaction center. The non-pigmented gamma chains may constitute additional components.

Its subcellular location is the cell inner membrane. Antenna complexes are light-harvesting systems, which transfer the excitation energy to the reaction centers. This chain is Light-harvesting protein B-875 beta chain (pufB), found in Cereibacter sphaeroides (Rhodobacter sphaeroides).